The following is a 98-amino-acid chain: MAKQNQDENLITLVDEQGNETLYQELFNFHSDDYDKSYILLIPAGSEPEEQVDVLAFAFNPDENDDSQDYELFDIESDEEWEMVEGVLDTFLNDENMR.

Belongs to the UPF0473 family.

In Ligilactobacillus salivarius (strain UCC118) (Lactobacillus salivarius), this protein is UPF0473 protein LSL_1108.